The following is a 412-amino-acid chain: Branched-chain alpha-ketoacid dehydrogenase kinase (412 aa).

The N-terminal 30 residues, 1-30, are a transit peptide targeting the mitochondrion; it reads MILASVLRSGPGGGLPLRPLLGPALALRAR. Position 31 is a phosphoserine (serine 31). Phosphoserine; by autocatalysis is present on serine 52. Positions 159–404 constitute a Histidine kinase domain; sequence LDDHKDVVTL…DVYLRLRHID (246 aa). N6-acetyllysine is present on residues lysine 192 and lysine 233. Asparagine 279 and aspartate 315 together coordinate ATP. Asparagine 279 is a binding site for Mg(2+). K(+)-binding residues include valine 328, aspartate 330, and phenylalanine 333. ATP contacts are provided by threonine 334 and threonine 335. 2 positions are modified to phosphoserine: serine 356 and serine 360. Histidine 364, glycine 367, and leucine 370 together coordinate ATP. Glycine 367 contacts K(+).

Belongs to the PDK/BCKDK protein kinase family. Homodimer. Homotetramer. Dimerizes through interaction of two opposing nucleotide-binding domains. Interacts with E2 component of the branched-chain alpha-ketoacid dehydrogenase (BCKDH) complex. Competes with BCKDK for binding to the E2 component; this interaction is modulated by branched-chain alpha-keto acids. At steady state, BCKDH holoenzyme contains BCKDK and BCKDHA is phosphorylated. In response to high levels of branched-chain alpha-keto acids, the inhibitory BCKDK is replaced by activating PPM1K leading to BCKDHA dephosphorylation and BCAA degradation. Post-translationally, autophosphorylated. As to expression, ubiquitous.

Its subcellular location is the mitochondrion matrix. The enzyme catalyses L-seryl-[3-methyl-2-oxobutanoate dehydrogenase] + ATP = O-phospho-L-seryl-[3-methyl-2-oxobutanoate dehydrogenase] + ADP + H(+). The catalysed reaction is L-seryl-[protein] + ATP = O-phospho-L-seryl-[protein] + ADP + H(+). It functions in the pathway protein modification. Its activity is regulated as follows. Allosterically inhibited by certain thiazoles and thiophenes: thiazoles increase interaction with DBT/BCKDH-E2, whereas thiophenes reduce this interaction. Inhibited by 3,6- dichlorobenzo[b]thiophene-2-carboxylic acid (BT2). The ATP binding is mediated by both potassium and magnesium ions. In terms of biological role, serine/threonine-protein kinase component of macronutrients metabolism. Forms a functional kinase and phosphatase pair with PPM1K, serving as a metabolic regulatory node that coordinates branched-chain amino acids (BCAAs) with glucose and lipid metabolism via two distinct phosphoprotein targets: mitochondrial BCKDHA subunit of the branched-chain alpha-ketoacid dehydrogenase (BCKDH) complex and cytosolic ACLY, a lipogenic enzyme of Krebs cycle. Phosphorylates and inactivates mitochondrial BCKDH complex a multisubunit complex consisting of three multimeric components each involved in different steps of BCAA catabolism: E1 composed of BCKDHA and BCKDHB, E2 core composed of DBT monomers, and E3 composed of DLD monomers. Associates with the E2 component of BCKDH complex and phosphorylates BCKDHA on Ser-337, leading to conformational changes that interrupt substrate channeling between E1 and E2 and inactivates the BCKDH complex. Phosphorylates ACLY on Ser-455 in response to changes in cellular carbohydrate abundance such as occurs during fasting to feeding metabolic transition. Refeeding stimulates MLXIPL/ChREBP transcription factor, leading to increased BCKDK to PPM1K expression ratio, phosphorylation and activation of ACLY that ultimately results in the generation of malonyl-CoA and oxaloacetate immediate substrates of de novo lipogenesis and glucogenesis, respectively. Recognizes phosphosites having SxxE/D canonical motif. The sequence is that of Branched-chain alpha-ketoacid dehydrogenase kinase from Homo sapiens (Human).